Consider the following 98-residue polypeptide: Phosphoribosyl-ATP pyrophosphatase (98 aa).

The protein belongs to the PRA-PH family.

It is found in the cytoplasm. It catalyses the reaction 1-(5-phospho-beta-D-ribosyl)-ATP + H2O = 1-(5-phospho-beta-D-ribosyl)-5'-AMP + diphosphate + H(+). The protein operates within amino-acid biosynthesis; L-histidine biosynthesis; L-histidine from 5-phospho-alpha-D-ribose 1-diphosphate: step 2/9. This Haloarcula marismortui (strain ATCC 43049 / DSM 3752 / JCM 8966 / VKM B-1809) (Halobacterium marismortui) protein is Phosphoribosyl-ATP pyrophosphatase.